Here is a 396-residue protein sequence, read N- to C-terminus: S-adenosylmethionine synthase (396 aa).

Histidine 15 is an ATP binding site. Aspartate 17 contributes to the Mg(2+) binding site. Residue glutamate 43 participates in K(+) binding. L-methionine is bound by residues glutamate 56 and glutamine 99. Residues glutamine 99–lysine 109 form a flexible loop region. Residues aspartate 175–lysine 177, arginine 241–phenylalanine 242, aspartate 250, arginine 256–lysine 257, alanine 273, and lysine 277 contribute to the ATP site. Aspartate 250 contacts L-methionine. Lysine 281 is an L-methionine binding site.

Belongs to the AdoMet synthase family. As to quaternary structure, homotetramer; dimer of dimers. It depends on Mg(2+) as a cofactor. K(+) is required as a cofactor.

The protein resides in the cytoplasm. The enzyme catalyses L-methionine + ATP + H2O = S-adenosyl-L-methionine + phosphate + diphosphate. It participates in amino-acid biosynthesis; S-adenosyl-L-methionine biosynthesis; S-adenosyl-L-methionine from L-methionine: step 1/1. Functionally, catalyzes the formation of S-adenosylmethionine (AdoMet) from methionine and ATP. The overall synthetic reaction is composed of two sequential steps, AdoMet formation and the subsequent tripolyphosphate hydrolysis which occurs prior to release of AdoMet from the enzyme. The sequence is that of S-adenosylmethionine synthase from Ruminiclostridium cellulolyticum (strain ATCC 35319 / DSM 5812 / JCM 6584 / H10) (Clostridium cellulolyticum).